Reading from the N-terminus, the 45-residue chain is MNGETPAQKAARLAAAAALAAKTAADAAAKAAAKAAAIAAAAASA.

M1 is modified (blocked amino end (Met)). 3 repeats span residues 9-21, 22-33, and 34-45; these read KAAR…ALAA, KTAADAAAKAAA, and KAAAIAAAAASA.

Belongs to the type-I AFP family.

In terms of biological role, antifreeze proteins lower the blood freezing point. The chain is Ice-structuring protein SS-8 from Myoxocephalus scorpius (Shorthorn sculpin).